The sequence spans 250 residues: 3-deoxy-manno-octulosonate cytidylyltransferase (250 aa).

Belongs to the KdsB family.

The protein resides in the cytoplasm. It catalyses the reaction 3-deoxy-alpha-D-manno-oct-2-ulosonate + CTP = CMP-3-deoxy-beta-D-manno-octulosonate + diphosphate. It participates in nucleotide-sugar biosynthesis; CMP-3-deoxy-D-manno-octulosonate biosynthesis; CMP-3-deoxy-D-manno-octulosonate from 3-deoxy-D-manno-octulosonate and CTP: step 1/1. The protein operates within bacterial outer membrane biogenesis; lipopolysaccharide biosynthesis. Its function is as follows. Activates KDO (a required 8-carbon sugar) for incorporation into bacterial lipopolysaccharide in Gram-negative bacteria. The polypeptide is 3-deoxy-manno-octulosonate cytidylyltransferase (Pectobacterium carotovorum subsp. carotovorum (strain PC1)).